The primary structure comprises 137 residues: BolA-like protein 1 (137 aa).

Serine 81 carries the post-translational modification Phosphoserine. A disordered region spans residues 115 to 137 (RENPQLDISPPCLGGSKKTRGTS).

The protein belongs to the BolA/IbaG family. Interacts with GLRX5.

It localises to the mitochondrion. In terms of biological role, acts as a mitochondrial iron-sulfur (Fe-S) cluster assembly factor that facilitates (Fe-S) cluster insertion into a subset of mitochondrial proteins. Probably acts together with the monothiol glutaredoxin GLRX5. May protect cells against oxidative stress. This is BolA-like protein 1 (Bola1) from Mus musculus (Mouse).